The chain runs to 179 residues: GTP-dependent dephospho-CoA kinase (179 aa).

6 residues coordinate GTP: aspartate 49, valine 50, valine 51, aspartate 68, lysine 70, and glutamate 126.

Belongs to the GTP-dependent DPCK family.

It carries out the reaction 3'-dephospho-CoA + GTP = GDP + CoA + H(+). Its pathway is cofactor biosynthesis; coenzyme A biosynthesis. Functionally, catalyzes the GTP-dependent phosphorylation of the 3'-hydroxyl group of dephosphocoenzyme A to form coenzyme A (CoA). The polypeptide is GTP-dependent dephospho-CoA kinase (Pyrococcus abyssi (strain GE5 / Orsay)).